Here is a 30-residue protein sequence, read N- to C-terminus: SGSGVRSAKKGGKAQGGQAGVGYKGSTEPG.

A disordered region spans residues 1–30 (SGSGVRSAKKGGKAQGGQAGVGYKGSTEPG). Over residues 13 to 23 (KAQGGQAGVGY) the composition is skewed to gly residues.

Its subcellular location is the plastid. The protein localises to the chloroplast. In terms of biological role, may be a component of the cytochrome b6/f complex which is part of the photosynthetic respiratory chain. This chain is Cytochrome b6/f complex 12.6 kDa peptide, found in Euglena gracilis.